The chain runs to 235 residues: Probable transcriptional regulatory protein Ccur92_05350 (235 aa).

It belongs to the TACO1 family.

The protein localises to the cytoplasm. The chain is Probable transcriptional regulatory protein Ccur92_05350 from Campylobacter curvus (strain 525.92).